Reading from the N-terminus, the 660-residue chain is Kinesin-like protein KIF2A (660 aa).

The disordered stretch occupies residues 1–140 (MVTSLNEDNE…QQELREKRAQ (140 aa)). A globular region spans residues 1–171 (MVTSLNEDNE…LDYRPLTTAD (171 aa)). S48 is modified (phosphoserine). Phosphothreonine occurs at positions 51 and 70. A Phosphoserine modification is found at S73. The residue at position 75 (K75) is an N6-acetyllysine. Residues 96–106 (LPEQSSSAQQN) are compositionally biased toward polar residues. Positions 113 to 140 (CVKEVEKLQEKREKRRLQQQELREKRAQ) are enriched in basic and acidic residues. Positions 177–507 (RICVCVRKRP…LRYANRVKEL (331 aa)) constitute a Kinesin motor domain. 267-274 (GQTGSGKT) provides a ligand contact to ATP. Residues 614–653 (ATQLEAILEQKIDILTELRDKVKSFRAALQEEEQASKQIN) are a coiled coil.

This sequence belongs to the TRAFAC class myosin-kinesin ATPase superfamily. Kinesin family. MCAK/KIF2 subfamily. In terms of assembly, interacts with AURKA and PLK1. Interacts with PSRC1. Interacts with MCRS1; the interaction enhances recruitment of KIF2A to the minus ends of spindle microtubules which promotes chromosome alignment.

Its subcellular location is the cytoplasm. It is found in the cytoskeleton. The protein resides in the microtubule organizing center. It localises to the centrosome. The protein localises to the spindle pole. Its subcellular location is the spindle. In terms of biological role, plus end-directed microtubule-dependent motor required for normal brain development. May regulate microtubule dynamics during axonal growth. Required for normal progression through mitosis. Required for normal congress of chromosomes at the metaphase plate. Required for normal spindle dynamics during mitosis. Promotes spindle turnover. Implicated in formation of bipolar mitotic spindles. Has microtubule depolymerization activity. The chain is Kinesin-like protein KIF2A (KIF2A) from Bos taurus (Bovine).